Here is a 100-residue protein sequence, read N- to C-terminus: Putative exopolysaccharide production repressor protein y4xQ (100 aa).

A run of 2 helical transmembrane segments spans residues 9 to 29 (ILWL…GSIS) and 35 to 55 (TMVG…FLLW). The interval 66–100 (TTGQFHGEEQPGDPRIAGTHGRTDGDPCFEDEDSR) is disordered.

It to Rhizobium exopolysaccharide production repressor protein (ExoX).

Its subcellular location is the cell membrane. Could be involved in the inhibition of exopolysaccharide synthesis (EPS) and nodulation ability (nod). In Sinorhizobium fredii (strain NBRC 101917 / NGR234), this protein is Putative exopolysaccharide production repressor protein y4xQ.